The sequence spans 343 residues: Transcription factor MYB11 (343 aa).

HTH myb-type domains follow at residues 9–61 (KVGI…INYL) and 62–116 (RSDI…SRKL). 2 consecutive DNA-binding regions (H-T-H motif) follow at residues 37–61 (WRSL…INYL) and 89–112 (WSTI…NSHL). Positions 126–146 (ANTVENAPPPPKRRPGRTSRS) are disordered.

In terms of tissue distribution, expressed in seedlings, roots, cotyledons, leaves and apical meristems.

The protein resides in the nucleus. In terms of biological role, modulates overall growth by reducing the proliferation activity of meristematic cells and delaying development. Flavonol-specific transcription activator involved in the regulation of several genes of flavonoid biosynthesis. Activates the expression of CHS, CHI, F3H and FLS1. Confers tolerance to UV-B. The protein is Transcription factor MYB11 of Arabidopsis thaliana (Mouse-ear cress).